A 201-amino-acid chain; its full sequence is Recombination protein RecR (201 aa).

The C4-type zinc-finger motif lies at 60-75; the sequence is CKKCFNLTSEDECEIC. A Toprim domain is found at 83 to 177; sequence KLICVVAETK…KVTRIAYGLP (95 aa).

Belongs to the RecR family.

In terms of biological role, may play a role in DNA repair. It seems to be involved in an RecBC-independent recombinational process of DNA repair. It may act with RecF and RecO. This chain is Recombination protein RecR, found in Prochlorococcus marinus (strain MIT 9215).